We begin with the raw amino-acid sequence, 337 residues long: DNA-directed RNA polymerase subunit alpha (337 aa).

Residues 1–233 (MVREEVAGST…DLFLPFLHTE (233 aa)) are alpha N-terminal domain (alpha-NTD). The alpha C-terminal domain (alpha-CTD) stretch occupies residues 267–337 (IPLNCIFIDQ…LPMDLPKNKF (71 aa)).

Belongs to the RNA polymerase alpha chain family. As to quaternary structure, in plastids the minimal PEP RNA polymerase catalytic core is composed of four subunits: alpha, beta, beta', and beta''. When a (nuclear-encoded) sigma factor is associated with the core the holoenzyme is formed, which can initiate transcription.

It is found in the plastid. Its subcellular location is the chloroplast. It catalyses the reaction RNA(n) + a ribonucleoside 5'-triphosphate = RNA(n+1) + diphosphate. DNA-dependent RNA polymerase catalyzes the transcription of DNA into RNA using the four ribonucleoside triphosphates as substrates. In Oryza nivara (Indian wild rice), this protein is DNA-directed RNA polymerase subunit alpha.